The primary structure comprises 125 residues: Ribosome-binding factor A (125 aa).

Belongs to the RbfA family. Monomer. Binds 30S ribosomal subunits, but not 50S ribosomal subunits or 70S ribosomes.

It is found in the cytoplasm. In terms of biological role, one of several proteins that assist in the late maturation steps of the functional core of the 30S ribosomal subunit. Associates with free 30S ribosomal subunits (but not with 30S subunits that are part of 70S ribosomes or polysomes). Required for efficient processing of 16S rRNA. May interact with the 5'-terminal helix region of 16S rRNA. The protein is Ribosome-binding factor A of Thermosipho melanesiensis (strain DSM 12029 / CIP 104789 / BI429).